The sequence spans 1000 residues: C2 domain-containing protein 5 (1000 aa).

A C2 domain is found at 1–109 (MPGKLKVKIV…EAATVISGWF (109 aa)). The Ca(2+) site is built by aspartate 19, aspartate 26, aspartate 76, aspartate 78, serine 81, and aspartate 84. Residue serine 197 is modified to Phosphoserine; by PKB/AKT2. A phosphoserine mark is found at serine 200 and serine 260. Positions 265–330 (MKEIPFNEDP…SGSAGKEGGP (66 aa)) are disordered. The segment covering 274–289 (PNPNTHSSGPSTPLKN) has biased composition (polar residues). Over residues 290 to 318 (QTYSFSPSKSYSRQSSSSDTDLSLTPKTG) the composition is skewed to low complexity. A phosphoserine mark is found at serine 293, serine 295, serine 304, serine 305, and serine 306. Threonine 317 is subject to Phosphothreonine. Residues 319–328 (MGSGSAGKEG) are compositionally biased toward gly residues. Serine 323 carries the post-translational modification Phosphoserine. Phosphothreonine is present on threonine 601. Residues 639–669 (EIIGSPIPEPRQRSRLLRSQSESSDEVTELD) form a disordered region. Phosphoserine occurs at positions 643, 657, 659, 661, and 662. Threonine 666 bears the Phosphothreonine mark. Position 671 is a phosphoserine (serine 671). Position 807 is a phosphothreonine (threonine 807). Serine 817 and serine 852 each carry phosphoserine.

It depends on Ca(2+) as a cofactor. Post-translationally, phosphorylated on Ser-197 by active myristoylated kinase AKT2; insulin-stimulated phosphorylation by AKT2 regulates SLC2A4/GLUT4 translocation into the plasma membrane.

The protein localises to the cytoplasmic vesicle membrane. Its subcellular location is the cytoplasm. The protein resides in the cell cortex. It is found in the cell membrane. It localises to the cell projection. The protein localises to the ruffle. Functionally, required for insulin-stimulated glucose transport and glucose transporter SLC2A4/GLUT4 translocation from intracellular glucose storage vesicle (GSV) to the plasma membrane (PM) in adipocytes. Binds phospholipid membranes in a calcium-dependent manner and is necessary for the optimal membrane fusion between SLC2A4/GLUT4 GSV and the PM. This is C2 domain-containing protein 5 (C2CD5) from Homo sapiens (Human).